A 523-amino-acid chain; its full sequence is L-tyrosine:2-oxoglutarate aminotransferase ucdG (523 aa).

It belongs to the class-I pyridoxal-phosphate-dependent aminotransferase family. In terms of assembly, homodimer. Requires pyridoxal 5'-phosphate as cofactor.

The protein resides in the cytoplasm. It catalyses the reaction L-tyrosine + 2-oxoglutarate = 3-(4-hydroxyphenyl)pyruvate + L-glutamate. It functions in the pathway secondary metabolite biosynthesis. Its function is as follows. Nonribosomal peptide synthetase that mediates the biosynthesis of usterphenyllins and uscandidusins, p-terphenyl derivatives. Within the pathway, ucdG is probably involved in the conversion of L-tyrosine into 4-hydroxyphenylpyruvate (HPPA) as a precursor for the usterphenyllin and uscandidusin biosynthesis. UcdE further prenylates position C-14 of ring C of usterphenyllin B to form usterphenyllin A. The pathway begin with the biosynthesis of 4-hydroxyphenylpyruvate (HPPA) from L-tyrosine, possibly by the aminotransferase ucdG. The nonribosomal peptide synthetase ucdA then condenses two HPPA units to produce atromentin. The key step in this pathway is the reduction and dehydration of atromentin to form a terphenyl triol intermediate, performed by the NAD-dependent dehydrogenase ucdB. Further O-methylation by the methyltransferase ucdC forms terphenyllin carrying two methoxy moieties at C-9 and C-12, and subsequent dihydroxylation at C-3 of ring A and C-15 of ring C by the flavin-dependent oxygenase ucdD leads to 3,15-dihydroxyterphenyllin. Prenylation by ucdE at position C-5 of ring A forms usterphenyllin B, and is followed by a second prenylation at position C-14 of ring C to form usterphenyllin A. The following furan ring formation that leads to uscandidusins A and B was proven to be an unexpected spontaneous non-enzymatic reaction. The protein is L-tyrosine:2-oxoglutarate aminotransferase ucdG of Aspergillus ustus.